We begin with the raw amino-acid sequence, 803 residues long: Volume-regulated anion channel subunit LRRC8C (803 aa).

The Cytoplasmic portion of the chain corresponds to 1–22 (MIPVTEFRQFSEQQPAFRVLKP). Residues 23 to 43 (WWDVFTDYLSVAMLMIGVFGC) traverse the membrane as a helical segment. Residues 44-125 (TLQVMQDKII…YERALHWYAK (82 aa)) are Extracellular-facing. 2 disulfide bridges follow: cysteine 54–cysteine 308 and cysteine 115–cysteine 293. 2 N-linked (GlcNAc...) asparagine glycosylation sites follow: asparagine 64 and asparagine 70. A helical transmembrane segment spans residues 126–146 (YFPYLVLIHTLVFMLCSNFWF). The Cytoplasmic portion of the chain corresponds to 147-266 (KFPGSSSKIE…ILYAMYVRQT (120 aa)). Positions 177-211 (EVSGEDSEEKDNRKNNMNRSNTIQSGPEGSLVKSQ) are disordered. Positions 191–211 (NNMNRSNTIQSGPEGSLVKSQ) are enriched in polar residues. Phosphoserine is present on residues serine 212 and serine 215. The helical transmembrane segment at 267 to 287 (VLKVIKFLIIIAYNSALVSKV) threads the bilayer. Over 288 to 320 (QFTVDCNVDIQDMTGYKNFSCNHTMAHLFSKLS) the chain is Extracellular. The helical transmembrane segment at 321 to 341 (FCYLCFVSIYGLTCLYTLYWL) threads the bilayer. The Cytoplasmic segment spans residues 342–803 (FYRSLREYSF…SDVREQMKAD (462 aa)). LRR repeat units follow at residues 397–420 (ENKLKQLNLNNEWTPDKLRQKLQT), 421–443 (NAHNRLELPLIMLSGLPDTVFEI), 446–466 (LQSLKLEIIKNVMIPATIAQL), 467–488 (DNLQELSLHQCSVKIHSAALSF), 490–513 (KENLKVLSVKFDDMRELPPWMYGL), 515–537 (NLEELYLVGSLSHDISKNVTLES), 541–563 (LKSLKILSIKSNVSKIPQAVVDV), 565–587 (SHLQKMCIHNDGTKLVMLNNLKK), 588–611 (MTNLTELELVHCDLERIPHAVFSL), 613–635 (SLQELDLKENNLKSIEEIVSFQH), 637–659 (RKLTVLKLWYNSIAYIPEHIKKL), 660–682 (TSLERLFFSHNKVEVLPSHLFLC), 684–705 (KIRYLDLSYNDIRFIPPEIGVL), 706–728 (QSLQYFSITCNKVESLPDELYFC), 730–751 (KLKTLKIGKNSLSVLSPKIGNL), 752–774 (LFLSYLDIKGNHFEVLPPELGDC), and 776–799 (ALKRAGLVVEDALFETLPSDVREQ).

Belongs to the LRRC8 family. Heterohexamer; oligomerizes with other LRRC8 proteins (LRRC8A, LRRC8B, LRRC8D and/or LRRC8E) to form a heterohexamer. Homoheptamer; inactive, likely because it is not targeted to the plasma membrane in the absence of LRRC8A. In vivo, the subunit composition may depend primarily on expression levels, and heterooligomeric channels containing various proportions of the different LRRC8 proteins may coexist.

It is found in the cell membrane. The protein localises to the endoplasmic reticulum membrane. The enzyme catalyses chloride(in) = chloride(out). It catalyses the reaction iodide(out) = iodide(in). It carries out the reaction taurine(out) = taurine(in). The catalysed reaction is 2',3'-cGAMP(out) = 2',3'-cGAMP(in). In terms of biological role, non-essential component of the volume-regulated anion channel (VRAC, also named VSOAC channel), an anion channel required to maintain a constant cell volume in response to extracellular or intracellular osmotic changes. The VRAC channel conducts iodide better than chloride and can also conduct organic osmolytes like taurine. Plays a redundant role in the efflux of amino acids, such as aspartate and glutamate, in response to osmotic stress. The VRAC channel also mediates transport of immunoreactive cyclic dinucleotide GMP-AMP (2'-3'-cGAMP), an immune messenger produced in response to DNA virus in the cytosol. Channel activity requires LRRC8A plus at least one other family member (LRRC8B, LRRC8C, LRRC8D or LRRC8E); channel characteristics depend on the precise subunit composition. This chain is Volume-regulated anion channel subunit LRRC8C, found in Rattus norvegicus (Rat).